A 61-amino-acid chain; its full sequence is 2S seed storage albumin protein (61 aa).

It belongs to the 2S seed storage albumins family. As to quaternary structure, the mature protein consists of a small and a large chain linked by 2 disulfide bonds.

Its function is as follows. This is a 2S seed storage protein. Inhibits cell-free protein synthesis. This Cucurbita moschata (Winter crookneck squash) protein is 2S seed storage albumin protein.